The primary structure comprises 314 residues: tRNA pseudouridine synthase B (314 aa).

H43 serves as a coordination point for substrate. The active-site Nucleophile is D48. 3 residues coordinate substrate: Y76, Y179, and L200.

Belongs to the pseudouridine synthase TruB family. Type 1 subfamily.

It carries out the reaction uridine(55) in tRNA = pseudouridine(55) in tRNA. Functionally, responsible for synthesis of pseudouridine from uracil-55 in the psi GC loop of transfer RNAs. The polypeptide is tRNA pseudouridine synthase B (Shigella dysenteriae serotype 1 (strain Sd197)).